The primary structure comprises 239 residues: Lactate utilization protein A (239 aa).

The protein belongs to the LutA/YkgE family.

Functionally, is involved in L-lactate degradation and allows cells to grow with lactate as the sole carbon source. The protein is Lactate utilization protein A of Bacillus cytotoxicus (strain DSM 22905 / CIP 110041 / 391-98 / NVH 391-98).